The sequence spans 20 residues: 2-oxo-acid reductase (20 aa).

Belongs to the AOR/FOR family. Forms various types of homooligomers. [4Fe-4S] cluster serves as cofactor. Mo-molybdopterin is required as a cofactor.

It localises to the cell membrane. The catalysed reaction is a (2R)-2-hydroxycarboxylate + A = a 2-oxocarboxylate + AH2. With respect to regulation, is inhibited by cyanide. Is sensitive to oxygen. Its function is as follows. Oxidoreductase with an extremely broad substrate specificity that can reduce reversibly 2-oxocarboxylates to (2R)-hydroxycarboxylates. The polypeptide is 2-oxo-acid reductase (Proteus hauseri).